A 141-amino-acid chain; its full sequence is Metallothiol transferase FosB (141 aa).

The VOC domain maps to 5-120; it reads SINHLLFSVS…DGHKFEFHTG (116 aa). Positions 8, 67, and 116 each coordinate Mg(2+). The active-site Proton donor/acceptor is the glutamate 116.

This sequence belongs to the fosfomycin resistance protein family. FosB subfamily. As to quaternary structure, homodimer. Mg(2+) is required as a cofactor.

The protein localises to the cytoplasm. Its function is as follows. Metallothiol transferase which confers resistance to fosfomycin by catalyzing the addition of a thiol cofactor to fosfomycin. L-cysteine is probably the physiological thiol donor. The sequence is that of Metallothiol transferase FosB from Lysinibacillus sphaericus (strain C3-41).